A 1425-amino-acid chain; its full sequence is Zinc finger FYVE domain-containing protein 9 (1425 aa).

2 disordered regions span residues 201 to 255 (ESTE…IGRD) and 291 to 352 (EDLT…SGRN). The span at 202-225 (STEKDMNSEKQMDPLNRPKTEGRS) shows a compositional bias: basic and acidic residues. Polar residues-rich tracts occupy residues 230-245 (CPTSSDSLASVCSPSQ) and 296-312 (KISSPRTDLGSPNSFSH). Phosphoserine is present on residues Ser-306 and Ser-668. The segment at 699 to 758 (DSQAPNCMKCEARFTFTKRRHHCRACGKVFCASCCSLKCKLLYMDRKEARVCVICHSVLM) adopts an FYVE-type zinc-finger fold. 8 residues coordinate Zn(2+): Cys-705, Cys-708, Cys-721, Cys-724, Cys-729, Cys-732, Cys-750, and Cys-753. Residues 767–823 (MSASSQSPNPNNPAEYCSTIPPLQQAQASGALSSPPPTVMVPVGVLKHPGAEVAQPR) form an SBD region.

In terms of assembly, interacts (via the SBD region) with SMAD2; the interaction recruits SMAD2 to the TGF-beta receptor and is disrupted by phosphorylation of SMAD2 upon TGF-beta receptor activation. Interacts with SMAD3. Interacts with TGFBR1 and TGFBR2; the interaction recruits SMAD2 to the TGF-beta receptor. Interacts with PML. Ubiquitous. In the brain found primarily in the cerebrovascular smooth muscle cells and reactive astrocytes.

It is found in the cytoplasm. The protein resides in the early endosome membrane. Its function is as follows. Early endosomal protein that functions to recruit SMAD2/SMAD3 to intracellular membranes and to the TGF-beta receptor. Plays a significant role in TGF-mediated signaling by regulating the subcellular location of SMAD2 and SMAD3 and modulating the transcriptional activity of the SMAD3/SMAD4 complex. Possibly associated with TGF-beta receptor internalization. The protein is Zinc finger FYVE domain-containing protein 9 (ZFYVE9) of Homo sapiens (Human).